The chain runs to 215 residues: 3-isopropylmalate dehydratase small subunit (215 aa).

The protein belongs to the LeuD family. LeuD type 1 subfamily. Heterodimer of LeuC and LeuD.

It carries out the reaction (2R,3S)-3-isopropylmalate = (2S)-2-isopropylmalate. It functions in the pathway amino-acid biosynthesis; L-leucine biosynthesis; L-leucine from 3-methyl-2-oxobutanoate: step 2/4. Catalyzes the isomerization between 2-isopropylmalate and 3-isopropylmalate, via the formation of 2-isopropylmaleate. The protein is 3-isopropylmalate dehydratase small subunit of Xylella fastidiosa (strain M23).